Here is a 295-residue protein sequence, read N- to C-terminus: Forkhead box protein N5 (295 aa).

Residues Ser-119–Asn-146 form a disordered region. A DNA-binding region (fork-head) is located at residues Arg-178–Leu-275.

As to expression, ubiquitously expressed in early cleavage stage and gastrula stage embryos.

It is found in the nucleus. In Xenopus laevis (African clawed frog), this protein is Forkhead box protein N5.